Here is a 294-residue protein sequence, read N- to C-terminus: MAITAQMVKELREKTGAGMMDCKKALTETNGDMEKAIDWLREKGIAKAAKKADRIAAEGMAYIAVEGNTAVILEVNSETDFVAKNEAFQTLVKELAAHLLKQKPASLDEALGQTMDNGSTVQDYINEAIAKIGEKITLRRFAVVNKADGETFGAYLHMGGRIGVLTLLAGNASEDVAKDVAMHIAALHPKYVSRDDVPQEEIAHEREVLKQQALNEGKPEKIVEKMVEGRLNKFYEDVCLLEQAFVKNPDVTVRQYVESNGATVKQFIRYEVGEGLEKRQDNFAEEVMSQVRKQ.

The segment at 79 to 82 (TDFV) is involved in Mg(2+) ion dislocation from EF-Tu.

Belongs to the EF-Ts family.

Its subcellular location is the cytoplasm. Associates with the EF-Tu.GDP complex and induces the exchange of GDP to GTP. It remains bound to the aminoacyl-tRNA.EF-Tu.GTP complex up to the GTP hydrolysis stage on the ribosome. This is Elongation factor Ts (tsf) from Geobacillus kaustophilus (strain HTA426).